The primary structure comprises 583 residues: Chromosomal replication initiator protein DnaA (583 aa).

Positions 1–91 are domain I, interacts with DnaA modulators; it reads MSNSNFSIEE…KHVLKTRLDL (91 aa). Residues 91 to 241 form a domain II region; sequence LSVSLAITST…SFNDGLDGES (151 aa). The segment at 151-239 is disordered; the sequence is KAEQRDGASQ…SSSFNDGLDG (89 aa). The span at 172 to 182 shows a compositional bias: basic and acidic residues; sequence EAARRREHDAD. The segment at 242-458 is domain III, AAA+ region; it reads LLNKNYTFEN…GALIRVTAYC (217 aa). G286, G288, K289, and T290 together coordinate ATP. The interval 459-583 is domain IV, binds dsDNA; that stretch reads ALSHEPLTVE…TQKIKSHARD (125 aa).

It belongs to the DnaA family. Oligomerizes as a right-handed, spiral filament on DNA at oriC.

It is found in the cytoplasm. In terms of biological role, plays an essential role in the initiation and regulation of chromosomal replication. ATP-DnaA binds to the origin of replication (oriC) to initiate formation of the DNA replication initiation complex once per cell cycle. Binds the DnaA box (a 9 base pair repeat at the origin) and separates the double-stranded (ds)DNA. Forms a right-handed helical filament on oriC DNA; dsDNA binds to the exterior of the filament while single-stranded (ss)DNA is stabiized in the filament's interior. The ATP-DnaA-oriC complex binds and stabilizes one strand of the AT-rich DNA unwinding element (DUE), permitting loading of DNA polymerase. After initiation quickly degrades to an ADP-DnaA complex that is not apt for DNA replication. Binds acidic phospholipids. The chain is Chromosomal replication initiator protein DnaA from Corynebacterium jeikeium (strain K411).